A 194-amino-acid polypeptide reads, in one-letter code: UPF0301 protein FTH_1193 (194 aa).

The protein belongs to the UPF0301 (AlgH) family.

The polypeptide is UPF0301 protein FTH_1193 (Francisella tularensis subsp. holarctica (strain OSU18)).